A 680-amino-acid polypeptide reads, in one-letter code: DNA-directed RNA polymerase subunit beta' (680 aa).

The Zn(2+) site is built by Cys69, Cys71, Cys87, and Cys90. Residues Asp489, Asp491, and Asp493 each coordinate Mg(2+).

Belongs to the RNA polymerase beta' chain family. RpoC1 subfamily. In terms of assembly, in plastids the minimal PEP RNA polymerase catalytic core is composed of four subunits: alpha, beta, beta', and beta''. When a (nuclear-encoded) sigma factor is associated with the core the holoenzyme is formed, which can initiate transcription. Mg(2+) is required as a cofactor. Zn(2+) serves as cofactor.

Its subcellular location is the plastid. The protein localises to the chloroplast. The enzyme catalyses RNA(n) + a ribonucleoside 5'-triphosphate = RNA(n+1) + diphosphate. In terms of biological role, DNA-dependent RNA polymerase catalyzes the transcription of DNA into RNA using the four ribonucleoside triphosphates as substrates. This chain is DNA-directed RNA polymerase subunit beta', found in Aethionema grandiflorum (Persian stone-cress).